A 378-amino-acid chain; its full sequence is Ribosomal RNA large subunit methyltransferase G (378 aa).

The protein belongs to the methyltransferase superfamily. RlmG family.

The protein localises to the cytoplasm. It catalyses the reaction guanosine(1835) in 23S rRNA + S-adenosyl-L-methionine = N(2)-methylguanosine(1835) in 23S rRNA + S-adenosyl-L-homocysteine + H(+). Specifically methylates the guanine in position 1835 (m2G1835) of 23S rRNA. This chain is Ribosomal RNA large subunit methyltransferase G, found in Salmonella arizonae (strain ATCC BAA-731 / CDC346-86 / RSK2980).